Here is a 170-residue protein sequence, read N- to C-terminus: tRNA-specific adenosine deaminase 2 (170 aa).

The CMP/dCMP-type deaminase domain maps to 3-128 (EEIQNWMHKA…SVLNVAGDNI (126 aa)). H54 contributes to the Zn(2+) binding site. Catalysis depends on E56, which acts as the Proton donor. Positions 90 and 93 each coordinate Zn(2+).

Belongs to the cytidine and deoxycytidylate deaminase family. ADAT2 subfamily. Requires Zn(2+) as cofactor.

The catalysed reaction is adenosine(34) in tRNA + H2O + H(+) = inosine(34) in tRNA + NH4(+). Probably participates in deamination of adenosine-34 to inosine in many tRNAs. The chain is tRNA-specific adenosine deaminase 2 (adat2) from Xenopus tropicalis (Western clawed frog).